The primary structure comprises 30 residues: Thrombin-like enzyme LmrSP-2 (30 aa).

Belongs to the peptidase S1 family. Snake venom subfamily. As to expression, expressed by the venom gland.

The protein localises to the secreted. Functionally, thrombin-like snake venom serine protease that cleaves alpha-chain of fibrinogen (FGA) releases only fibrinopeptide A. Shows coagulant, esterase and amidase activities. The sequence is that of Thrombin-like enzyme LmrSP-2 from Lachesis muta rhombeata (Bushmaster).